Here is a 148-residue protein sequence, read N- to C-terminus: MVDWTDAERAAISSLWGKIDVGEIGPQALTRLLIVYPWTQRHFTTFGNVSTNAAILGNPKVAQHGKTVMGGLENAVKNLDDIKNTYAKLSQMHSEKLHVDPDNFRTLAECISVCVAAKFGKQVFTADVQEAWQKFLSVVVSALGRQYH.

A Globin domain is found at Asp-3–His-148. The heme b site is built by His-64 and His-93.

This sequence belongs to the globin family. Heterotetramer of two alpha chains and two beta chains. In terms of tissue distribution, red blood cells.

Its function is as follows. Involved in oxygen transport from gills to the various peripheral tissues. The chain is Hemoglobin subunit beta-A (hbb1) from Seriola quinqueradiata (Five-ray yellowtail).